The primary structure comprises 169 residues: Ribosome maturation factor RimM (169 aa).

The PRC barrel domain occupies 97 to 169 (EDEYYWTDLV…TITADWGLDY (73 aa)).

Belongs to the RimM family. Binds ribosomal protein uS19.

The protein resides in the cytoplasm. Functionally, an accessory protein needed during the final step in the assembly of 30S ribosomal subunit, possibly for assembly of the head region. Essential for efficient processing of 16S rRNA. May be needed both before and after RbfA during the maturation of 16S rRNA. It has affinity for free ribosomal 30S subunits but not for 70S ribosomes. This chain is Ribosome maturation factor RimM, found in Neisseria meningitidis serogroup B (strain ATCC BAA-335 / MC58).